A 166-amino-acid polypeptide reads, in one-letter code: PTS system glucose-specific EIIA component (166 aa).

A PTS EIIA type-1 domain is found at 36–140 (DVVFSEKIVG…SVLTPIVISN (105 aa)). The Zn(2+) site is built by His73 and His88. Residue His88 is the Tele-phosphohistidine intermediate; for EIIA activity of the active site. A Phosphohistidine; by HPr modification is found at His88.

Heterodimer with glycerol kinase (glpk). Zn(2+) serves as cofactor.

Its subcellular location is the cytoplasm. Functionally, the phosphoenolpyruvate-dependent sugar phosphotransferase system (sugar PTS), a major carbohydrate active transport system, catalyzes the phosphorylation of incoming sugar substrates concomitantly with their translocation across the cell membrane. The enzyme II complex composed of PtsG and Crr is involved in glucose transport. The sequence is that of PTS system glucose-specific EIIA component (crr) from Haemophilus influenzae (strain ATCC 51907 / DSM 11121 / KW20 / Rd).